Reading from the N-terminus, the 320-residue chain is Aspartate carbamoyltransferase catalytic subunit (320 aa).

2 residues coordinate carbamoyl phosphate: Arg-68 and Thr-69. Lys-96 is an L-aspartate binding site. Residues Arg-118, His-148, and Gln-151 each coordinate carbamoyl phosphate. L-aspartate is bound by residues Arg-181 and Arg-236. 2 residues coordinate carbamoyl phosphate: Gly-277 and Pro-278.

It belongs to the aspartate/ornithine carbamoyltransferase superfamily. ATCase family. Heterododecamer (2C3:3R2) of six catalytic PyrB chains organized as two trimers (C3), and six regulatory PyrI chains organized as three dimers (R2).

The enzyme catalyses carbamoyl phosphate + L-aspartate = N-carbamoyl-L-aspartate + phosphate + H(+). It functions in the pathway pyrimidine metabolism; UMP biosynthesis via de novo pathway; (S)-dihydroorotate from bicarbonate: step 2/3. Catalyzes the condensation of carbamoyl phosphate and aspartate to form carbamoyl aspartate and inorganic phosphate, the committed step in the de novo pyrimidine nucleotide biosynthesis pathway. This chain is Aspartate carbamoyltransferase catalytic subunit, found in Delftia acidovorans (strain DSM 14801 / SPH-1).